The sequence spans 437 residues: GTPase Obg (437 aa).

In terms of domain architecture, Obg spans 2–160; it reads SMFLDTAKIS…RQLELELKIL (159 aa). Residues 161–338 form the OBG-type G domain; sequence ADVGLVGFPS…LLEATAELLA (178 aa). GTP-binding positions include 167-174, 192-196, 214-217, 284-287, and 319-321; these read GFPSVGKS, FTTIV, DLPG, NKMD, and SSL. The Mg(2+) site is built by Ser174 and Thr194. One can recognise an OCT domain in the interval 359-437; sequence GFAETEKDFE…IGKFEFEFVD (79 aa).

This sequence belongs to the TRAFAC class OBG-HflX-like GTPase superfamily. OBG GTPase family. Monomer. Mg(2+) serves as cofactor.

The protein localises to the cytoplasm. Its function is as follows. An essential GTPase which binds GTP, GDP and possibly (p)ppGpp with moderate affinity, with high nucleotide exchange rates and a fairly low GTP hydrolysis rate. Plays a role in control of the cell cycle, stress response, ribosome biogenesis and in those bacteria that undergo differentiation, in morphogenesis control. This Streptococcus pyogenes serotype M5 (strain Manfredo) protein is GTPase Obg.